We begin with the raw amino-acid sequence, 404 residues long: Cysteine desulfurase IscS (404 aa).

Residues 75–76 (AT), Asn155, Gln183, and 203–205 (SAH) contribute to the pyridoxal 5'-phosphate site. Lys206 carries the N6-(pyridoxal phosphate)lysine modification. A pyridoxal 5'-phosphate-binding site is contributed by Thr243. Cys328 acts as the Cysteine persulfide intermediate in catalysis. Cys328 serves as a coordination point for [2Fe-2S] cluster.

The protein belongs to the class-V pyridoxal-phosphate-dependent aminotransferase family. NifS/IscS subfamily. In terms of assembly, homodimer. Forms a heterotetramer with IscU, interacts with other sulfur acceptors. Pyridoxal 5'-phosphate is required as a cofactor.

It localises to the cytoplasm. The enzyme catalyses (sulfur carrier)-H + L-cysteine = (sulfur carrier)-SH + L-alanine. Its pathway is cofactor biosynthesis; iron-sulfur cluster biosynthesis. Master enzyme that delivers sulfur to a number of partners involved in Fe-S cluster assembly, tRNA modification or cofactor biosynthesis. Catalyzes the removal of elemental sulfur atoms from cysteine to produce alanine. Functions as a sulfur delivery protein for Fe-S cluster synthesis onto IscU, an Fe-S scaffold assembly protein, as well as other S acceptor proteins. In Stutzerimonas stutzeri (strain A1501) (Pseudomonas stutzeri), this protein is Cysteine desulfurase IscS.